A 208-amino-acid polypeptide reads, in one-letter code: Small ribosomal subunit protein eS8 (208 aa).

The disordered stretch occupies residues 1–40 (MGISRDNWHKRRKTGGKRKPVHKKRKYELGRPPSNTKLGP). Residues 8–26 (WHKRRKTGGKRKPVHKKRK) show a composition bias toward basic residues.

The protein belongs to the eukaryotic ribosomal protein eS8 family. As to quaternary structure, component of the small ribosomal subunit.

It localises to the cytoplasm. Functionally, component of the small ribosomal subunit. The ribosome is a large ribonucleoprotein complex responsible for the synthesis of proteins in the cell. The polypeptide is Small ribosomal subunit protein eS8 (rps8) (Ictalurus punctatus (Channel catfish)).